The sequence spans 264 residues: Putative [LysW]-aminoadipate/[LysW]-glutamate kinase (264 aa).

Substrate-binding positions include 34–35 (GG), R61, and N169.

It belongs to the acetylglutamate kinase family. LysZ subfamily.

It is found in the cytoplasm. The enzyme catalyses [amino-group carrier protein]-C-terminal-N-(1,4-dicarboxybutan-1-yl)-L-glutamine + ATP = [amino-group carrier protein]-C-terminal-N-(1-carboxy-5-phosphooxy-5-oxopentan-1-yl)-L-glutamine + ADP. It carries out the reaction [amino-group carrier protein]-C-terminal-gamma-(L-glutamyl)-L-glutamate + ATP = [amino-group carrier protein]-C-terminal-gamma-(5-phospho-L-glutamyl)-L-glutamate + ADP. It participates in amino-acid biosynthesis; L-lysine biosynthesis via AAA pathway; L-lysine from L-alpha-aminoadipate (Thermus route): step 2/5. Its pathway is amino-acid biosynthesis; L-arginine biosynthesis. Its function is as follows. Involved in both the arginine and lysine biosynthetic pathways. Phosphorylates the LysW-bound precursors glutamate (for arginine biosynthesis), respectively alpha-aminoadipate (for lysine biosynthesis). This chain is Putative [LysW]-aminoadipate/[LysW]-glutamate kinase, found in Ignicoccus hospitalis (strain KIN4/I / DSM 18386 / JCM 14125).